A 509-amino-acid chain; its full sequence is Cytochrome P450 6A1 (509 aa).

Cys449 contacts heme.

Belongs to the cytochrome P450 family. The cofactor is heme.

It localises to the endoplasmic reticulum membrane. Its subcellular location is the microsome membrane. The enzyme catalyses an organic molecule + reduced [NADPH--hemoprotein reductase] + O2 = an alcohol + oxidized [NADPH--hemoprotein reductase] + H2O + H(+). Involved in the metabolism of insect hormones and in the breakdown of synthetic insecticides. The chain is Cytochrome P450 6A1 (CYP6A1) from Musca domestica (House fly).